The sequence spans 290 residues: Pre-mRNA-splicing factor cwf20 (290 aa).

Disordered stretches follow at residues Met-1–Phe-61 and Pro-114–Thr-134. Polar residues predominate over residues Pro-114–Glu-128.

As to quaternary structure, belongs to the 40S cdc5-associated complex (or cwf complex), a spliceosome sub-complex reminiscent of a late-stage spliceosome composed of the U2, U5 and U6 snRNAs and at least brr2, cdc5, cwf2/prp3, cwf3/syf1, cwf4/syf3, cwf5/ecm2, spp42/cwf6, cwf7/spf27, cwf8, cwf9, cwf10, cwf11, cwf12, prp45/cwf13, cwf14, cwf15, cwf16, cwf17, cwf18, cwf19, cwf20, cwf21, cwf22, cwf23, cwf24, cwf25, cwf26, cyp7/cwf27, cwf28, cwf29/ist3, lea1, msl1, prp5/cwf1, prp10, prp12/sap130, prp17, prp22, sap61, sap62, sap114, sap145, slu7, smb1, smd1, smd3, smf1, smg1 and syf2.

It is found in the nucleus. In terms of biological role, involved in mRNA splicing where it associates with cdc5 and the other cwf proteins as part of the spliceosome. In Schizosaccharomyces pombe (strain 972 / ATCC 24843) (Fission yeast), this protein is Pre-mRNA-splicing factor cwf20 (cwf20).